The sequence spans 515 residues: FADH(2)-dependent monooxygenase TftD (515 aa).

100-104 (RLPDA) serves as a coordination point for substrate. Residues 151-153 (LNF), 157-160 (QTDR), and Thr-192 contribute to the FAD site. Residue 203-204 (GC) coordinates substrate. 457–460 (TMTR) is a binding site for FAD.

Belongs to the FADH(2)-utilizing monooxygenase family. As to quaternary structure, homotetramer. The chlorophenol-4-monooxygenase is composed of an oxygenase component TftD and a reductase component TftC.

The protein operates within xenobiotic degradation. Its function is as follows. Oxygenase component of a two-component system that degrades 2,4,5-trichlorophenol. Uses FADH(2) supplied by TftC to oxidize 2,4,5-trichlorophenol (2,4,5-TCP) to 2,5-dichloro-p-benzoquinone, which is chemically reduced to 2,5-dichloro-p-hydroquinone (2,5-DiCHQ). Then, TftD oxidizes the latter to 5-chloro-2-hydroxy-p-benzoquinone. The protein is FADH(2)-dependent monooxygenase TftD (tftD) of Burkholderia cepacia (Pseudomonas cepacia).